The chain runs to 360 residues: Cysteine proteinase 2 (360 aa).

The N-terminal stretch at 1 to 19 is a signal peptide; that stretch reads MVPRRLFVLAVVVLADTAA. Residues 20–142 constitute a propeptide, activation peptide; the sequence is VVNSGFADSN…NHRMRAAAVA (123 aa). Asn-125 is a glycosylation site (N-linked (GlcNAc...) asparagine). 2 cysteine pairs are disulfide-bonded: Cys-164-Cys-207 and Cys-198-Cys-240. Cys-167 is a catalytic residue. Residue Asn-256 is glycosylated (N-linked (GlcNAc...) asparagine). Cys-298 and Cys-348 are joined by a disulfide. Residues His-307 and Asn-327 contribute to the active site.

Belongs to the peptidase C1 family. As to expression, expressed at the onset of germination.

It localises to the vacuole. In terms of biological role, involved in the degradation of the storage protein zein. May play a role in proteolysis during emergencies. The polypeptide is Cysteine proteinase 2 (CCP2) (Zea mays (Maize)).